The sequence spans 278 residues: NAD-capped RNA hydrolase NudC (278 aa).

Residue R84 participates in substrate binding. 2 residues coordinate Zn(2+): C114 and C117. E127 is a binding site for substrate. C132 provides a ligand contact to Zn(2+). Y140 lines the substrate pocket. Positions 141–264 (PRISPSMIVL…SIARYLIEAY (124 aa)) constitute a Nudix hydrolase domain. A divalent metal cation contacts are provided by A174, E190, and E194. Residues 175 to 196 (GFVEPGESAEDCVHREVMEEVQ) carry the Nudix box motif. Position 208-215 (208-215 (QCWPFPHS)) interacts with substrate. E235 lines the a divalent metal cation pocket. A257 contacts substrate.

Belongs to the Nudix hydrolase family. NudC subfamily. As to quaternary structure, homodimer. Mg(2+) serves as cofactor. It depends on Mn(2+) as a cofactor. Requires Zn(2+) as cofactor.

The enzyme catalyses a 5'-end NAD(+)-phospho-ribonucleoside in mRNA + H2O = a 5'-end phospho-adenosine-phospho-ribonucleoside in mRNA + beta-nicotinamide D-ribonucleotide + 2 H(+). It carries out the reaction NAD(+) + H2O = beta-nicotinamide D-ribonucleotide + AMP + 2 H(+). The catalysed reaction is NADH + H2O = reduced beta-nicotinamide D-ribonucleotide + AMP + 2 H(+). Its function is as follows. mRNA decapping enzyme that specifically removes the nicotinamide adenine dinucleotide (NAD) cap from a subset of mRNAs by hydrolyzing the diphosphate linkage to produce nicotinamide mononucleotide (NMN) and 5' monophosphate mRNA. The NAD-cap is present at the 5'-end of some mRNAs and stabilizes RNA against 5'-processing. Has preference for mRNAs with a 5'-end purine. Catalyzes the hydrolysis of a broad range of dinucleotide pyrophosphates. The chain is NAD-capped RNA hydrolase NudC from Pseudomonas syringae pv. tomato (strain ATCC BAA-871 / DC3000).